Here is a 151-residue protein sequence, read N- to C-terminus: Arginine repressor (151 aa).

It belongs to the ArgR family. Homohexamer.

It localises to the cytoplasm. It functions in the pathway amino-acid biosynthesis; L-arginine biosynthesis [regulation]. In terms of biological role, regulates arginine biosynthesis genes. This is Arginine repressor (argR) from Haemophilus influenzae (strain ATCC 51907 / DSM 11121 / KW20 / Rd).